We begin with the raw amino-acid sequence, 137 residues long: Large ribosomal subunit protein uL16 (137 aa).

This sequence belongs to the universal ribosomal protein uL16 family. Part of the 50S ribosomal subunit.

Functionally, binds 23S rRNA and is also seen to make contacts with the A and possibly P site tRNAs. This chain is Large ribosomal subunit protein uL16, found in Xanthobacter autotrophicus (strain ATCC BAA-1158 / Py2).